A 600-amino-acid chain; its full sequence is Glutamine--fructose-6-phosphate aminotransferase [isomerizing] (600 aa).

Catalysis depends on cysteine 2, which acts as the Nucleophile; for GATase activity. The 216-residue stretch at 2 to 217 folds into the Glutamine amidotransferase type-2 domain; sequence CGIVGYIGQL…DKEMVIVTDK (216 aa). SIS domains lie at 283-422 and 452-590; these read ISNA…SRGK and IARE…VDKP. The active-site For Fru-6P isomerization activity is the lysine 595.

As to quaternary structure, homodimer.

The protein localises to the cytoplasm. The catalysed reaction is D-fructose 6-phosphate + L-glutamine = D-glucosamine 6-phosphate + L-glutamate. Its function is as follows. Catalyzes the first step in hexosamine metabolism, converting fructose-6P into glucosamine-6P using glutamine as a nitrogen source. The protein is Glutamine--fructose-6-phosphate aminotransferase [isomerizing] of Bacillus licheniformis (strain ATCC 14580 / DSM 13 / JCM 2505 / CCUG 7422 / NBRC 12200 / NCIMB 9375 / NCTC 10341 / NRRL NRS-1264 / Gibson 46).